A 587-amino-acid polypeptide reads, in one-letter code: Arginine--tRNA ligase (587 aa).

The short motif at 126–136 (ANPTGPLHVGH) is the 'HIGH' region element.

It belongs to the class-I aminoacyl-tRNA synthetase family. As to quaternary structure, monomer.

The protein resides in the cytoplasm. The enzyme catalyses tRNA(Arg) + L-arginine + ATP = L-arginyl-tRNA(Arg) + AMP + diphosphate. This chain is Arginine--tRNA ligase, found in Azoarcus sp. (strain BH72).